The primary structure comprises 733 residues: Methionine--tRNA ligase (733 aa).

Positions 11–21 (PYANGPIHAGH) match the 'HIGH' region motif. Positions 143, 146, 156, and 159 each coordinate Zn(2+). The short motif at 345–349 (KFSTS) is the 'KMSKS' region element. Thr-348 is a binding site for ATP. In terms of domain architecture, tRNA-binding spans 633–733 (DFMKLDLRVG…KEVKLGARIR (101 aa)).

It belongs to the class-I aminoacyl-tRNA synthetase family. MetG type 1 subfamily. In terms of assembly, homodimer. Requires Zn(2+) as cofactor.

Its subcellular location is the cytoplasm. The enzyme catalyses tRNA(Met) + L-methionine + ATP = L-methionyl-tRNA(Met) + AMP + diphosphate. Its function is as follows. Is required not only for elongation of protein synthesis but also for the initiation of all mRNA translation through initiator tRNA(fMet) aminoacylation. The protein is Methionine--tRNA ligase of Thermococcus onnurineus (strain NA1).